Here is a 289-residue protein sequence, read N- to C-terminus: F-box protein PP2-B15 (289 aa).

In terms of domain architecture, F-box spans 1 to 43 (MMLPEACVATILSFTTPADTISSAAVSSVFRVAGDSDFVWEKF).

The polypeptide is F-box protein PP2-B15 (PP2B15) (Arabidopsis thaliana (Mouse-ear cress)).